The primary structure comprises 125 residues: UPF0738 protein GK0828 (125 aa).

This sequence belongs to the UPF0738 family.

This is UPF0738 protein GK0828 from Geobacillus kaustophilus (strain HTA426).